Here is a 248-residue protein sequence, read N- to C-terminus: 5'-nucleotidase SurE (248 aa).

A divalent metal cation contacts are provided by Asp8, Asp9, Ser39, and Asn91.

Belongs to the SurE nucleotidase family. A divalent metal cation serves as cofactor.

It localises to the cytoplasm. The catalysed reaction is a ribonucleoside 5'-phosphate + H2O = a ribonucleoside + phosphate. Nucleotidase that shows phosphatase activity on nucleoside 5'-monophosphates. The protein is 5'-nucleotidase SurE of Shewanella amazonensis (strain ATCC BAA-1098 / SB2B).